Here is a 427-residue protein sequence, read N- to C-terminus: Serine hydroxymethyltransferase (427 aa).

(6S)-5,6,7,8-tetrahydrofolate-binding positions include L124 and 128–130; that span reads GHL. Position 233 is an N6-(pyridoxal phosphate)lysine (K233).

Belongs to the SHMT family. Homodimer. The cofactor is pyridoxal 5'-phosphate.

It is found in the cytoplasm. It catalyses the reaction (6R)-5,10-methylene-5,6,7,8-tetrahydrofolate + glycine + H2O = (6S)-5,6,7,8-tetrahydrofolate + L-serine. The protein operates within one-carbon metabolism; tetrahydrofolate interconversion. It functions in the pathway amino-acid biosynthesis; glycine biosynthesis; glycine from L-serine: step 1/1. Functionally, catalyzes the reversible interconversion of serine and glycine with tetrahydrofolate (THF) serving as the one-carbon carrier. This reaction serves as the major source of one-carbon groups required for the biosynthesis of purines, thymidylate, methionine, and other important biomolecules. Also exhibits THF-independent aldolase activity toward beta-hydroxyamino acids, producing glycine and aldehydes, via a retro-aldol mechanism. The chain is Serine hydroxymethyltransferase from Acidothermus cellulolyticus (strain ATCC 43068 / DSM 8971 / 11B).